Consider the following 398-residue polypeptide: Na(+)/H(+) antiporter NhaA (398 aa).

11 helical membrane passes run 14–34 (AAGV…NWSV), 60–80 (LLLW…GLEV), 96–116 (MLPL…FLLF), 125–145 (VGWA…LTLL), 155–175 (VFLL…IALF), 179–199 (QIFW…AYLN), 214–234 (IVLW…GVIV), 263–283 (FLII…GIVL), 292–312 (LGIA…LSWL), 330–350 (IVAV…ITLL), and 362–382 (YAKL…YLAL).

It belongs to the NhaA Na(+)/H(+) (TC 2.A.33) antiporter family.

It localises to the cell inner membrane. The enzyme catalyses Na(+)(in) + 2 H(+)(out) = Na(+)(out) + 2 H(+)(in). Its function is as follows. Na(+)/H(+) antiporter that extrudes sodium in exchange for external protons. The chain is Na(+)/H(+) antiporter NhaA from Pectobacterium carotovorum subsp. carotovorum (strain PC1).